The chain runs to 394 residues: MVSFTQLQLAFLGLSALGAAVPVTGTSEKKTFSLNQVKVAGTKTKNPAEHYANALRKYGAEVPSHVLAAAAATGSVTTSPTEFDSEYLTPIDVGGTTMNLDIDTGSSDLWVFSKELPSSETSGHAVYSPSSQSQLLNGYSWSISYGDGSSASGNVYLDYVTVGGVTASSQAVEAAETISSEFQQDPSDGLMGLAFSSINTVQPESQSTFFDNVQSNLASPVFCADLKYEAPGVYDFGFIDSSKHTGSVTYTPVDNSQGFWGFTASGYAVGSGSTVSTSISGIADTGTTLLLLPSSIVKKYYAQVKGSSNSATYGGYVFPCSATLPKFTVVINGYKAVIAAQYLNYSPVETGSSTCFGGIQSDTGIGFSIFGDIFLKSQYVVFDASGPRLGFAPQ.

Residues 1–20 (MVSFTQLQLAFLGLSALGAA) form the signal peptide. Residues 21–70 (VPVTGTSEKKTFSLNQVKVAGTKTKNPAEHYANALRKYGAEVPSHVLAAA) constitute a propeptide, activation peptide. The Peptidase A1 domain maps to 87–392 (YLTPIDVGGT…DASGPRLGFA (306 aa)). Catalysis depends on residues aspartate 103 and aspartate 284. An intrachain disulfide couples cysteine 320 to cysteine 355.

This sequence belongs to the peptidase A1 family. Monomer.

The protein resides in the secreted. The catalysed reaction is Hydrolysis of proteins with broad specificity similar to that of pepsin A, preferring hydrophobic residues at P1 and P1', but also cleaving 20-Gly-|-Glu-21 in the B chain of insulin. Clots milk, and activates trypsinogen.. In terms of biological role, secreted aspartic endopeptidase that allows assimilation of proteinaceous substrates. The scissile peptide bond is attacked by a nucleophilic water molecule activated by two aspartic residues in the active site. Shows a broad primary substrate specificity. Favors hydrophobic residues at the P1 and P1' positions, but can also activate trypsinogen and hydrolyze the B chain of insulin between positions 'Gly-20' and 'Glu-21'. The chain is Penicillopepsin-3 from Penicillium janthinellum (Penicillium vitale).